Reading from the N-terminus, the 394-residue chain is Elongation factor Tu 2 (394 aa).

The tr-type G domain maps to 10–204 (KPHVNVGTIG…ALDSYIPEPE (195 aa)). The G1 stretch occupies residues 19–26 (GHVDHGKT). GTP is bound at residue 19 to 26 (GHVDHGKT). Residue Thr26 participates in Mg(2+) binding. The G2 stretch occupies residues 60–64 (GITIN). The segment at 81 to 84 (DCPG) is G3. GTP contacts are provided by residues 81 to 85 (DCPGH) and 136 to 139 (NKCD). The segment at 136 to 139 (NKCD) is G4. The tract at residues 174–176 (SAL) is G5.

This sequence belongs to the TRAFAC class translation factor GTPase superfamily. Classic translation factor GTPase family. EF-Tu/EF-1A subfamily. In terms of assembly, monomer.

The protein resides in the cytoplasm. The catalysed reaction is GTP + H2O = GDP + phosphate + H(+). GTP hydrolase that promotes the GTP-dependent binding of aminoacyl-tRNA to the A-site of ribosomes during protein biosynthesis. The sequence is that of Elongation factor Tu 2 from Shewanella sp. (strain MR-4).